A 61-amino-acid chain; its full sequence is Small ribosomal subunit protein uS14 (61 aa).

Zn(2+) contacts are provided by cysteine 24, cysteine 27, cysteine 40, and cysteine 43.

The protein belongs to the universal ribosomal protein uS14 family. Zinc-binding uS14 subfamily. Part of the 30S ribosomal subunit. Contacts proteins S3 and S10. Requires Zn(2+) as cofactor.

Its function is as follows. Binds 16S rRNA, required for the assembly of 30S particles and may also be responsible for determining the conformation of the 16S rRNA at the A site. The polypeptide is Small ribosomal subunit protein uS14 (Thermotoga maritima (strain ATCC 43589 / DSM 3109 / JCM 10099 / NBRC 100826 / MSB8)).